Consider the following 211-residue polypeptide: Phosphoheptose isomerase (211 aa).

The SIS domain occupies 50-211; that stretch reads IAGTFEDGGK…VERMLGYCRL (162 aa). Residue 65–67 coordinates substrate; it reads NGG. Zn(2+) is bound by residues H74 and E78. Residues E78, 109-110, 135-137, S140, and Q188 each bind substrate; these read ND and STS. Zn(2+) contacts are provided by Q188 and H196.

It belongs to the SIS family. GmhA subfamily. It depends on Zn(2+) as a cofactor.

It is found in the cytoplasm. It carries out the reaction 2 D-sedoheptulose 7-phosphate = D-glycero-alpha-D-manno-heptose 7-phosphate + D-glycero-beta-D-manno-heptose 7-phosphate. It participates in carbohydrate biosynthesis; D-glycero-D-manno-heptose 7-phosphate biosynthesis; D-glycero-alpha-D-manno-heptose 7-phosphate and D-glycero-beta-D-manno-heptose 7-phosphate from sedoheptulose 7-phosphate: step 1/1. In terms of biological role, catalyzes the isomerization of sedoheptulose 7-phosphate in D-glycero-D-manno-heptose 7-phosphate. The sequence is that of Phosphoheptose isomerase from Pelodictyon phaeoclathratiforme (strain DSM 5477 / BU-1).